The following is a 452-amino-acid chain: Rhodopsin (452 aa).

At 1–33 the chain is on the extracellular side; that stretch reads MGRDIPDNETWWYNPYMDIHPHWKQFDQVPAAV. The N-linked (GlcNAc...) asparagine glycan is linked to asparagine 8. The chain crosses the membrane as a helical span at residues 34-58; the sequence is YYSLGIFIAICGIIGCVGNGVVIYL. The Cytoplasmic segment spans residues 59–70; it reads FTKTKSLQTPAN. Residues 71 to 97 form a helical membrane-spanning segment; that stretch reads MFIINLAFSDFTFSLVNGFPLMTISCF. Residues 98-109 are Extracellular-facing; the sequence is MKYWVFGNAACK. Cysteine 108 and cysteine 186 form a disulfide bridge. A helical transmembrane segment spans residues 110–131; sequence VYGLIGGIFGLMSIMTMTMISI. The 'Ionic lock' involved in activated form stabilization motif lies at 132–134; sequence DRY. At 132–151 the chain is on the cytoplasmic side; it reads DRYNVIGRPMSASKKMSHRK. A helical transmembrane segment spans residues 152 to 172; it reads AFIMIIFVWIWSTIWAIGPIF. Residues 173-199 lie on the Extracellular side of the membrane; the sequence is GWGAYTLEGVLCNCSFDYITRDTTTRS. The helical transmembrane segment at 200–224 threads the bilayer; the sequence is NILCMYIFAFMCPIVVIFFCYFNIV. The Cytoplasmic portion of the chain corresponds to 225-261; the sequence is MSVSNHEKEMAAMAKRLNAKELRKAQAGANAEMKLAK. Residues 262-283 traverse the membrane as a helical segment; the sequence is ISIVIVTQFLLSWSPYAVVALL. Over 284–293 the chain is Extracellular; the sequence is AQFGPIEWVT. Residues 294–315 traverse the membrane as a helical segment; sequence PYAAQLPVMFAKASAIHNPMIY. Position 305 is an N6-(retinylidene)lysine (lysine 305). The Cytoplasmic segment spans residues 316–452; that stretch reads SVSHPKFRER…QGVDNQAYQA (137 aa). Residues cysteine 336 and cysteine 337 are each lipidated (S-palmitoyl cysteine). Disordered stretches follow at residues 346–365 and 376–452; these read DDKD…GETA and MMQK…AYQA. Residues 376 to 388 show a composition bias toward low complexity; that stretch reads MMQKMQAQQQQQP. Pro residues predominate over residues 389–440; sequence AYPPQGYPPQGYPPPPPQGYPPQGYPPQGYPPQGYPPPPQGPPPQGPPPQAA.

The protein belongs to the G-protein coupled receptor 1 family. Opsin subfamily. In terms of processing, contains one covalently linked retinal chromophore. Upon light absorption, the covalently bound 11-cis-retinal is converted to all-trans-retinal. After hydrolysis of the Schiff base and release of the covalently bound all-trans-retinal, active rhodopsin is regenerated by binding of a fresh molecule of 11-cis-retinal.

It is found in the cell projection. The protein localises to the rhabdomere membrane. In terms of biological role, photoreceptor required for image-forming vision at low light intensity. Light-induced isomerization of 11-cis to all-trans retinal triggers a conformational change that activates signaling via G-proteins. Signaling mediates the activation of phospholipase C. Subsequent receptor phosphorylation mediates displacement of the bound G-protein alpha subunit by arrestin and terminates signaling. The protein is Rhodopsin (RHO) of Loligo forbesii (Veined squid).